Here is a 445-residue protein sequence, read N- to C-terminus: Methylenetetrahydrofolate--tRNA-(uracil-5-)-methyltransferase TrmFO (445 aa).

FAD is bound at residue 8-13 (GAGLAG).

It belongs to the MnmG family. TrmFO subfamily. Requires FAD as cofactor.

It is found in the cytoplasm. It carries out the reaction uridine(54) in tRNA + (6R)-5,10-methylene-5,6,7,8-tetrahydrofolate + NADH + H(+) = 5-methyluridine(54) in tRNA + (6S)-5,6,7,8-tetrahydrofolate + NAD(+). The enzyme catalyses uridine(54) in tRNA + (6R)-5,10-methylene-5,6,7,8-tetrahydrofolate + NADPH + H(+) = 5-methyluridine(54) in tRNA + (6S)-5,6,7,8-tetrahydrofolate + NADP(+). Functionally, catalyzes the folate-dependent formation of 5-methyl-uridine at position 54 (M-5-U54) in all tRNAs. The chain is Methylenetetrahydrofolate--tRNA-(uracil-5-)-methyltransferase TrmFO from Rhodobacter capsulatus (strain ATCC BAA-309 / NBRC 16581 / SB1003).